Consider the following 407-residue polypeptide: Methylthioribose kinase (407 aa).

Residues asparagine 40, lysine 57, and 111–113 (EDL) each bind ATP. Substrate is bound at residue aspartate 229. 246 to 248 (DAE) is a binding site for ATP. A substrate-binding site is contributed by arginine 344.

The protein belongs to the methylthioribose kinase family. As to quaternary structure, homodimer.

The enzyme catalyses 5-(methylsulfanyl)-D-ribose + ATP = 5-(methylsulfanyl)-alpha-D-ribose 1-phosphate + ADP + H(+). It functions in the pathway amino-acid biosynthesis; L-methionine biosynthesis via salvage pathway; S-methyl-5-thio-alpha-D-ribose 1-phosphate from S-methyl-5'-thioadenosine (hydrolase route): step 2/2. Functionally, catalyzes the phosphorylation of methylthioribose into methylthioribose-1-phosphate. The chain is Methylthioribose kinase from Yersinia pseudotuberculosis serotype O:1b (strain IP 31758).